We begin with the raw amino-acid sequence, 336 residues long: tRNA N6-adenosine threonylcarbamoyltransferase (336 aa).

Fe cation is bound by residues histidine 114 and histidine 118. Residues 136-140, aspartate 169, glycine 182, aspartate 186, and asparagine 275 each bind substrate; that span reads LVSGG. Aspartate 301 is a Fe cation binding site.

This sequence belongs to the KAE1 / TsaD family. Fe(2+) serves as cofactor.

The protein resides in the cytoplasm. It carries out the reaction L-threonylcarbamoyladenylate + adenosine(37) in tRNA = N(6)-L-threonylcarbamoyladenosine(37) in tRNA + AMP + H(+). Its function is as follows. Required for the formation of a threonylcarbamoyl group on adenosine at position 37 (t(6)A37) in tRNAs that read codons beginning with adenine. Is involved in the transfer of the threonylcarbamoyl moiety of threonylcarbamoyl-AMP (TC-AMP) to the N6 group of A37, together with TsaE and TsaB. TsaD likely plays a direct catalytic role in this reaction. In Streptococcus pneumoniae (strain Hungary19A-6), this protein is tRNA N6-adenosine threonylcarbamoyltransferase.